The sequence spans 908 residues: Autophagy-related protein 9 (908 aa).

At 1–216 the chain is on the cytoplasmic side; it reads MADGVIARLM…SGMWCIVVER (216 aa). Residues 64–162 form a disordered region; the sequence is SRATVDGRIP…IDQELQPPLH (99 aa). A helical membrane pass occupies residues 217 to 237; that stretch reads VLHLIKVAFVAFLLTFLSQCV. Residues 238-259 are Lumenal-facing; it reads DFKKIPSNQKLSQVLVPQCTRN. A glycan (N-linked (GlcNAc...) asparagine) is linked at N259. A helical transmembrane segment spans residues 260-280; sequence MSGLWNIGLWLFAFYFMWKSI. Residues 281–433 are Cytoplasmic-facing; that stretch reads QYILDLRRLT…GILSAKLRSR (153 aa). An intramembrane segment occupies 434–454; it reads FIFAGVMILILSPFVAGYLII. Residues 455–525 are Cytoplasmic-facing; the sequence is VYFLEYYNEI…KTSMVAKTVS (71 aa). A helical membrane pass occupies residues 526-546; the sequence is FIAGSIATVLALISVFDPEMF. The Lumenal portion of the chain corresponds to 547–555; the sequence is LGFEITHDR. The helical transmembrane segment at 556-576 threads the bilayer; sequence TVLFYTAVFGAIWSVARGSVS. Residues 577–622 lie on the Cytoplasmic side of the membrane; the sequence is EDNAVFDPEYALGNVVEYTHYQPEHWKDRWHSADVKAEFEELYKLK. Residues 623-643 lie within the membrane without spanning it; the sequence is LVIFIEEILSILTTPFVLFFS. The Cytoplasmic segment spans residues 644–908; it reads LPKSADQIID…HLNRRLGGVR (265 aa). Disordered stretches follow at residues 751–779 and 809–878; these read AASR…AVMA and QFRG…DSVV. A compositionally biased stretch (gly residues) spans 813–825; it reads GNQGDGHMMGGGS. Over residues 839–852 the composition is skewed to basic and acidic residues; the sequence is QTHDDESEDSRAGL.

This sequence belongs to the ATG9 family. Homotrimer; forms a homotrimer with a central pore that forms a path between the two membrane leaflets. Post-translationally, phosphorylated by apg-1. Apg-1 phosphorylation is required for preautophagosome elongation.

It is found in the preautophagosomal structure membrane. The protein resides in the cytoplasmic vesicle membrane. It localises to the golgi apparatus membrane. The protein localises to the endoplasmic reticulum membrane. It carries out the reaction a 1,2-diacyl-sn-glycero-3-phosphocholine(in) = a 1,2-diacyl-sn-glycero-3-phosphocholine(out). The enzyme catalyses a 1,2-diacyl-sn-glycero-3-phospho-L-serine(in) = a 1,2-diacyl-sn-glycero-3-phospho-L-serine(out). The catalysed reaction is a 1,2-diacyl-sn-glycero-3-phosphoethanolamine(in) = a 1,2-diacyl-sn-glycero-3-phosphoethanolamine(out). It catalyses the reaction a 1,2-diacyl-sn-glycero-3-phospho-(1D-myo-inositol-3-phosphate)(in) = a 1,2-diacyl-sn-glycero-3-phospho-(1D-myo-inositol-3-phosphate)(out). Its function is as follows. Phospholipid scramblase involved in autophagy and cytoplasm to vacuole transport (Cvt) vesicle formation. Cycles between the preautophagosomal structure/phagophore assembly site (PAS) and the cytoplasmic vesicle pool and supplies membrane for the growing autophagosome. Lipid scramblase activity plays a key role in preautophagosomal structure/phagophore assembly by distributing the phospholipids that arrive through atg-2 from the cytoplasmic to the luminal leaflet of the bilayer, thereby driving autophagosomal membrane expansion. Required for mitophagy. Also involved in endoplasmic reticulum-specific autophagic process and is essential for the survival of cells subjected to severe ER stress. Different machineries are required for anterograde trafficking to the PAS during either the Cvt pathway or bulk autophagy and for retrograde trafficking. This Neurospora crassa (strain ATCC 24698 / 74-OR23-1A / CBS 708.71 / DSM 1257 / FGSC 987) protein is Autophagy-related protein 9 (apg-7).